The sequence spans 37 residues: Large ribosomal subunit protein bL36c (37 aa).

Belongs to the bacterial ribosomal protein bL36 family.

It is found in the plastid. It localises to the chloroplast. In Oenothera argillicola (Appalachian evening primrose), this protein is Large ribosomal subunit protein bL36c.